A 225-amino-acid polypeptide reads, in one-letter code: MSCSKSMVLGYWDIRGLAHAIRMLLEFTDTSYEEKQYTCGEAPDYDRSQWLDVKFKLDLDFPNLPYLMDGKNKITQSNAILRYIARKHNMCGDTEEEKIRVDIMENQIMDFRMQLVRLCYNSNHESLKPQYLEQLPAQLKQFSLFLGKFTWFAGEKLTFVDFLTYDVLDQNRMFEPKCLDEFPNLKAFMCRFEALEKIAAFLQSDRCFKMPINNKMAKWGNKSIC.

Residues lysine 5–glycine 92 enclose the GST N-terminal domain. Residue serine 6 is modified to Phosphoserine. Glutathione-binding positions include tyrosine 11–tryptophan 12, tryptophan 50–lysine 54, asparagine 63–leucine 64, and glutamine 76–serine 77. The 119-residue stretch at threonine 94 to isoleucine 212 folds into the GST C-terminal domain. Position 120 (tyrosine 120) interacts with substrate.

The protein belongs to the GST superfamily. Mu family. As to quaternary structure, homodimer. In terms of processing, the N-terminus is blocked. Expressed in testis and brain. Very low expression in liver, kidney, heart and lung.

It localises to the cytoplasm. The catalysed reaction is RX + glutathione = an S-substituted glutathione + a halide anion + H(+). Its function is as follows. Conjugation of reduced glutathione to a wide number of exogenous and endogenous hydrophobic electrophiles. This Rattus norvegicus (Rat) protein is Glutathione S-transferase Mu 5 (Gstm5).